A 321-amino-acid polypeptide reads, in one-letter code: tRNA-5-methyluridine(54) 2-sulfurtransferase (321 aa).

Positions 3, 6, 22, and 25 each coordinate Zn(2+). ATP is bound by residues 53–55 (AVS), aspartate 59, and isoleucine 79. Positions 130 and 133 each coordinate [4Fe-4S] cluster. Residue lysine 137 forms a Glycyl lysine isopeptide (Lys-Gly) (interchain with G-Cter in TtuB) linkage. 2 residues coordinate ATP: glycine 156 and aspartate 161. Residue cysteine 222 coordinates [4Fe-4S] cluster. Glycyl lysine isopeptide (Lys-Gly) (interchain with G-Cter in TtuB) cross-links involve residues lysine 226 and lysine 229. 4 residues coordinate Zn(2+): cysteine 274, cysteine 277, cysteine 286, and cysteine 289.

Belongs to the TtcA family. TtuA subfamily. In terms of assembly, homodimer. Is able to form a heterocomplex with TtuB. The cofactor is [4Fe-4S] cluster. Mg(2+) serves as cofactor. Conjugated to TtuB via covalent linkages involving Lys-137, Lys-226 and Lys-229.

It carries out the reaction [TtuB sulfur-carrier protein]-C-terminal-Gly-aminoethanethioate + 5-methyluridine(54) in tRNA + ATP + H2O = [TtuB sulfur-carrier protein]-C-terminal Gly-Gly + 5-methyl-2-thiouridine(54) in tRNA + AMP + diphosphate + H(+). It participates in tRNA modification. Enzymatic activity may be regulated by TtuB conjugation. Its function is as follows. Catalyzes the ATP-dependent 2-thiolation of 5-methyluridine residue at position 54 in the T loop of tRNAs, leading to 5-methyl-2-thiouridine (m(5)s(2)U or s(2)T). This modification allows thermal stabilization of tRNAs in thermophilic microorganisms, and is required for cell growth at high temperatures. TtuA transfers the S atom from the thiocarboxylated C-terminus of TtuB to tRNA. In Thermus thermophilus (strain ATCC BAA-163 / DSM 7039 / HB27), this protein is tRNA-5-methyluridine(54) 2-sulfurtransferase.